The chain runs to 783 residues: uncharacterized protein (783 aa).

Residues 40-66 (CFNCKARKVRCDGANPCKACASNNLEC) constitute a DNA-binding region (zn(2)-C6 fungal-type).

The protein localises to the cytoplasm. The protein resides in the nucleus. This is an uncharacterized protein from Schizosaccharomyces pombe (strain 972 / ATCC 24843) (Fission yeast).